Consider the following 160-residue polypeptide: Lipoprotein signal peptidase (160 aa).

The next 3 membrane-spanning stretches (helical) occupy residues 13–33 (IYIT…RLII), 72–92 (WFLS…ITKL), and 104–124 (SLII…GFVV). Active-site residues include D125 and D143. A helical membrane pass occupies residues 134–154 (WHFATFNIADCSIFIGIIILM).

The protein belongs to the peptidase A8 family.

The protein localises to the cell inner membrane. The catalysed reaction is Release of signal peptides from bacterial membrane prolipoproteins. Hydrolyzes -Xaa-Yaa-Zaa-|-(S,diacylglyceryl)Cys-, in which Xaa is hydrophobic (preferably Leu), and Yaa (Ala or Ser) and Zaa (Gly or Ala) have small, neutral side chains.. The protein operates within protein modification; lipoprotein biosynthesis (signal peptide cleavage). This protein specifically catalyzes the removal of signal peptides from prolipoproteins. The sequence is that of Lipoprotein signal peptidase from Buchnera aphidicola subsp. Acyrthosiphon pisum (strain APS) (Acyrthosiphon pisum symbiotic bacterium).